Consider the following 356-residue polypeptide: Testis-expressed protein 19.1 (356 aa).

The tract at residues 1 to 78 (MCPPVSVRHG…WDAEPMEHLS (78 aa)) is interaction with LIRE1. The segment covering 59-72 (LSEEEEEEEVWDAE) has biased composition (acidic residues). Residues 59 to 107 (LSEEEEEEEVWDAEPMEHLSESESLESDSKQDAGSEQDAGSEPNTRSEQ) form a disordered region. Residues 73 to 91 (PMEHLSESESLESDSKQDA) show a composition bias toward basic and acidic residues. The segment at 139 to 186 (QWVVFSISVPTELLPQEAVPLDLGPEDVEWTQALPWRLDVLFPCSHRL) is important for interaction with piRNA.

In terms of assembly, interacts with UBR2; does not lead to Tex19.1 degradation and stabilizes it. Interacts with piRNA-associated proteins DDX4, EDC4, MAEL, PIWIL1, PIWIL2, RANBP9 and TDRD6. Interacts with L1RE1.

The protein localises to the cytoplasm. In terms of biological role, required during spermatogenesis and placenta development, participating in the repression of retrotransposable elements and prevent their mobilization. Collaborates with the Piwi-interacting RNA (piRNA) pathway, which mediates the repression of transposable elements during meiosis by forming complexes composed of piRNAs and Piwi proteins. Interacts with Piwi proteins and directly binds piRNAs, a class of 24 to 30 nucleotide RNAs that are generated by a Dicer-independent mechanism and are primarily derived from transposons and other repeated sequence elements. Also during spermatogenesis, promotes, with UBR2, SPO11-dependent recombination foci to accumulate and drive robust homologous chromosome synapsis. Interacts with LINE-1 retrotransposon encoded LIRE1, stimulates LIRE1 polyubiquitination, mediated by UBR2, and degradation, inhibiting LINE-1 retrotransposon mobilization. This is Testis-expressed protein 19.1 (Tex19.1) from Rattus norvegicus (Rat).